We begin with the raw amino-acid sequence, 658 residues long: UvrABC system protein B (658 aa).

Residues 25–182 (ESLNGGNSHQ…KGLVDIQYSR (158 aa)) form the Helicase ATP-binding domain. 38–45 (GVTGSGKT) is an ATP binding site. The Beta-hairpin signature appears at 91 to 114 (YYDYYQPEAYIPQTDTYIEKDASI). In terms of domain architecture, Helicase C-terminal spans 429–595 (QIDDLYSEIN…TVQKKVHDVI (167 aa)). The UVR domain occupies 622-657 (KELIAKLQEEMKQAAKELEFEKAAELRDLIMELKTA).

It belongs to the UvrB family. Forms a heterotetramer with UvrA during the search for lesions. Interacts with UvrC in an incision complex.

Its subcellular location is the cytoplasm. In terms of biological role, the UvrABC repair system catalyzes the recognition and processing of DNA lesions. A damage recognition complex composed of 2 UvrA and 2 UvrB subunits scans DNA for abnormalities. Upon binding of the UvrA(2)B(2) complex to a putative damaged site, the DNA wraps around one UvrB monomer. DNA wrap is dependent on ATP binding by UvrB and probably causes local melting of the DNA helix, facilitating insertion of UvrB beta-hairpin between the DNA strands. Then UvrB probes one DNA strand for the presence of a lesion. If a lesion is found the UvrA subunits dissociate and the UvrB-DNA preincision complex is formed. This complex is subsequently bound by UvrC and the second UvrB is released. If no lesion is found, the DNA wraps around the other UvrB subunit that will check the other stand for damage. This chain is UvrABC system protein B, found in Natranaerobius thermophilus (strain ATCC BAA-1301 / DSM 18059 / JW/NM-WN-LF).